A 186-amino-acid polypeptide reads, in one-letter code: MNVSKYVAIFSFVFIQLISVGKVFANADEWMTTFRENIAPTWQQPEHYDLYIPAITWHARFAYDKEKTDRYNERPWGVGFGLSRWDEKGNWHGLYAMAFKDSWNKWEPIAGYGWESTWRPLADENFHLGLGFTAGVTARDNWNYIPLPVLLPLASVGYGPVTFQMTYIPGTYNNGNVYFAWMRFQF.

The first 25 residues, 1–25, serve as a signal peptide directing secretion; sequence MNVSKYVAIFSFVFIQLISVGKVFA. Residues His58, Asp101, and Ser102 contribute to the active site.

Belongs to the lipid A palmitoyltransferase family. As to quaternary structure, homodimer.

The protein resides in the cell outer membrane. It carries out the reaction a lipid A + a 1,2-diacyl-sn-glycero-3-phosphocholine = a hepta-acyl lipid A + a 2-acyl-sn-glycero-3-phosphocholine. It catalyses the reaction a lipid IVA + a 1,2-diacyl-sn-glycero-3-phosphocholine = a lipid IVB + a 2-acyl-sn-glycero-3-phosphocholine. The catalysed reaction is a lipid IIA + a 1,2-diacyl-sn-glycero-3-phosphocholine = a lipid IIB + a 2-acyl-sn-glycero-3-phosphocholine. In terms of biological role, transfers a fatty acid residue from the sn-1 position of a phospholipid to the N-linked hydroxyfatty acid chain on the proximal unit of lipid A or its precursors. The sequence is that of Lipid A acyltransferase PagP from Shigella boydii serotype 4 (strain Sb227).